Consider the following 520-residue polypeptide: Cryptochrome DASH (520 aa).

The Photolyase/cryptochrome alpha/beta domain maps to 5–141 (RTVICLLRND…RVQTFWGSTL (137 aa)). The disordered stretch occupies residues 479–504 (SRHVNNKSSGPSSSKGRKGSSYTARQ).

It belongs to the DNA photolyase class-1 family. FAD is required as a cofactor. It depends on (6R)-5,10-methylene-5,6,7,8-tetrahydrofolate as a cofactor.

In terms of biological role, may have a photoreceptor function. Has weak cyclobutyl pyrimidine photolyase activity when expressed in E.coli and when tested in vitro. This Danio rerio (Zebrafish) protein is Cryptochrome DASH (cry-dash).